A 112-amino-acid polypeptide reads, in one-letter code: Integration host factor subunit alpha (112 aa).

This sequence belongs to the bacterial histone-like protein family. Heterodimer of an alpha and a beta chain.

Functionally, this protein is one of the two subunits of integration host factor, a specific DNA-binding protein that functions in genetic recombination as well as in transcriptional and translational control. In Sinorhizobium fredii (strain NBRC 101917 / NGR234), this protein is Integration host factor subunit alpha.